A 410-amino-acid chain; its full sequence is Arginine deiminase (410 aa).

Cysteine 400 (amidino-cysteine intermediate) is an active-site residue.

Belongs to the arginine deiminase family.

Its subcellular location is the cytoplasm. The catalysed reaction is L-arginine + H2O = L-citrulline + NH4(+). It participates in amino-acid degradation; L-arginine degradation via ADI pathway; carbamoyl phosphate from L-arginine: step 1/2. The chain is Arginine deiminase from Streptococcus agalactiae serotype III (strain NEM316).